The following is a 518-amino-acid chain: Gypsy retrotransposon integrase-like protein 1 (518 aa).

The Integrase catalytic domain maps to 135 to 293; sequence VVGNPWSVVT…PYFQMFNRNP (159 aa). Residues 326–348 are disordered; it reads NQTPAAGQMESSTSEELSKSKVA. Ser-498 carries the post-translational modification Phosphoserine.

The polypeptide is Gypsy retrotransposon integrase-like protein 1 (GIN1) (Rattus norvegicus (Rat)).